The following is a 410-amino-acid chain: Elongation factor Tu, chloroplastic (410 aa).

Residues 10-215 (KPHINIGTIG…MVDKYFPTPE (206 aa)) enclose the tr-type G domain. The tract at residues 19-26 (GHVDHGKT) is G1. 19 to 26 (GHVDHGKT) contacts GTP. Position 26 (T26) interacts with Mg(2+). The segment at 61–65 (GITIN) is G2. A G3 region spans residues 82–85 (DCPG). GTP-binding positions include 82 to 86 (DCPGH) and 137 to 140 (NKAD). A G4 region spans residues 137–140 (NKAD). Residues 175-177 (SAL) form a G5 region.

The protein belongs to the TRAFAC class translation factor GTPase superfamily. Classic translation factor GTPase family. EF-Tu/EF-1A subfamily.

Its subcellular location is the plastid. It localises to the chloroplast. It catalyses the reaction GTP + H2O = GDP + phosphate + H(+). In terms of biological role, GTP hydrolase that promotes the GTP-dependent binding of aminoacyl-tRNA to the A-site of ribosomes during protein biosynthesis. The polypeptide is Elongation factor Tu, chloroplastic (tufA) (Cyanidium caldarium (Red alga)).